The chain runs to 662 residues: Histidine decarboxylase (662 aa).

Residues Tyr81 and His194 each contribute to the substrate site. Lys305 carries the N6-(pyridoxal phosphate)lysine modification.

Belongs to the group II decarboxylase family. In terms of assembly, homodimer. Requires pyridoxal 5'-phosphate as cofactor.

The catalysed reaction is L-histidine + H(+) = histamine + CO2. It functions in the pathway amine and polyamine biosynthesis; histamine biosynthesis; histamine from L-histidine: step 1/1. Catalyzes the biosynthesis of histamine from histidine. This Homo sapiens (Human) protein is Histidine decarboxylase (HDC).